We begin with the raw amino-acid sequence, 380 residues long: GATOR1 complex protein NPRL2 (380 aa).

The segment at 1–133 (MGSSCRIECI…SKQKLVPIMT (133 aa)) is interaction with PDPK1. Residue R78 participates in GDP binding. R78 carries the post-translational modification Asymmetric dimethylarginine. Residues K158 and K357 each participate in a glycyl lysine isopeptide (Lys-Gly) (interchain with G-Cter in ubiquitin) cross-link.

Belongs to the NPR2 family. Within the GATOR complex, component of the GATOR1 subcomplex, made of DEPDC5, NPRL2 and NPRL3. GATOR1 mediates the strong interaction of the GATOR complex with small GTPases Rag (RagA/RRAGA, RagB/RRAGB, RagC/RRAGC and/or RagD/RRAGD) heterodimers. GATOR1 interacts with GPR155/LYCHOS; interaction takes place in presence of cholesterol and prevents interaction between GATOR1 and KICSTOR. Interacts with PDPK1. In the presence of abundant amino acids, ubiquitinated at Lys-158 and Lys-357 via 'Lys-6'-linked ubiquitination by the WDR24 component of the GATOR2 complex, thereby inhibiting the GATOR1 complex and promoting mTORC1 activation. In terms of processing, asymmetric dimethylation at Arg-78 by PRMT1 inhibits the GTPase activator activity of the GATOR1 complex and consequently inducing timely mTORC1 activation under methionine-sufficient conditions.

The protein resides in the lysosome membrane. Catalytic component of the GATOR1 complex, a multiprotein complex that functions as an inhibitor of the amino acid-sensing branch of the mTORC1 pathway. In response to amino acid depletion, the GATOR1 complex has GTPase activating protein (GAP) activity and strongly increases GTP hydrolysis by RagA/RRAGA (or RagB/RRAGB) within heterodimeric Rag complexes, thereby turning them into their inactive GDP-bound form, releasing mTORC1 from lysosomal surface and inhibiting mTORC1 signaling. In the presence of abundant amino acids, the GATOR1 complex is ubiquitinated and inhibited by GATOR2. Within the GATOR1 complex, NPRL2 constitutes the catalytic subunit that mediates the GTPase activator activity and under methionine-sufficient conditions, the GTPase activator activity is inhibited by PRMT1 through methylation and consequently inducing timely mTORC1 activation. Its function is as follows. Suppresses Src-dependent tyrosine phosphorylation and activation of PDPK1 and its downstream signaling. Down-regulates PDPK1 kinase activity by interfering with tyrosine phosphorylation at 'Tyr-9', 'Tyr-373' and 'Tyr-376' residues. May act as a tumor suppressor. Suppresses cell growth and enhances sensitivity to various anticancer drugs. This chain is GATOR1 complex protein NPRL2, found in Bos taurus (Bovine).